Reading from the N-terminus, the 623-residue chain is Putative pentatricopeptide repeat-containing protein At3g11460, mitochondrial (623 aa).

A mitochondrion-targeting transit peptide spans Met-1–Ser-35. PPR repeat units follow at residues Ala-17–Pro-51, Asp-52–Thr-86, Glu-87–Ser-117, Leu-120–Val-154, Asp-155–Ser-189, Glu-190–Lys-220, Gly-221–Pro-255, Asp-256–Pro-290, Asn-291–Lys-321, Ser-322–Pro-356, Asp-357–Glu-387, and Gly-393–Glu-423. The segment at Val-428–Lys-503 is type E motif. Positions Gly-504–Glu-535 are type E(+) motif. The segment at Leu-536–Trp-623 is type DYW motif.

The protein belongs to the PPR family. PCMP-H subfamily. In terms of assembly, interacts with MORF8/RIP1.

The protein resides in the mitochondrion. Its function is as follows. Involved in C-to-U editing of mitochondrial RNA. Required specifically for editing the mitochondrial NAD2 transcript. This chain is Putative pentatricopeptide repeat-containing protein At3g11460, mitochondrial (PCMP-H52), found in Arabidopsis thaliana (Mouse-ear cress).